A 339-amino-acid polypeptide reads, in one-letter code: Protein-glutamate methylesterase/protein-glutamine glutaminase 2 (339 aa).

Residues 2–119 (NIGIVNDLPL…GLSTDASPQA (118 aa)) enclose the Response regulatory domain. Asp-53 is modified (4-aspartylphosphate). The region spanning 141 to 336 (PGPAPERGQP…PQLISRITRP (196 aa)) is the CheB-type methylesterase domain. Residues Ser-158, His-185, and Asp-278 contribute to the active site.

The protein belongs to the CheB family. In terms of processing, phosphorylated by CheA. Phosphorylation of the N-terminal regulatory domain activates the methylesterase activity.

The protein resides in the cytoplasm. It carries out the reaction [protein]-L-glutamate 5-O-methyl ester + H2O = L-glutamyl-[protein] + methanol + H(+). The enzyme catalyses L-glutaminyl-[protein] + H2O = L-glutamyl-[protein] + NH4(+). Its function is as follows. Involved in chemotaxis. Part of a chemotaxis signal transduction system that modulates chemotaxis in response to various stimuli. Catalyzes the demethylation of specific methylglutamate residues introduced into the chemoreceptors (methyl-accepting chemotaxis proteins or MCP) by CheR. Also mediates the irreversible deamidation of specific glutamine residues to glutamic acid. This Burkholderia lata (strain ATCC 17760 / DSM 23089 / LMG 22485 / NCIMB 9086 / R18194 / 383) protein is Protein-glutamate methylesterase/protein-glutamine glutaminase 2.